The sequence spans 526 residues: ATP synthase subunit alpha (526 aa).

ATP is bound at residue Gly-171–Thr-178.

It belongs to the ATPase alpha/beta chains family. As to quaternary structure, F-type ATPases have 2 components, CF(1) - the catalytic core - and CF(0) - the membrane proton channel. CF(1) has five subunits: alpha(3), beta(3), gamma(1), delta(1), epsilon(1). CF(0) has three main subunits: a(1), b(2) and c(9-12). The alpha and beta chains form an alternating ring which encloses part of the gamma chain. CF(1) is attached to CF(0) by a central stalk formed by the gamma and epsilon chains, while a peripheral stalk is formed by the delta and b chains.

Its subcellular location is the cell membrane. The catalysed reaction is ATP + H2O + 4 H(+)(in) = ADP + phosphate + 5 H(+)(out). Functionally, produces ATP from ADP in the presence of a proton gradient across the membrane. The alpha chain is a regulatory subunit. The chain is ATP synthase subunit alpha from Christiangramia forsetii (strain DSM 17595 / CGMCC 1.15422 / KT0803) (Gramella forsetii).